We begin with the raw amino-acid sequence, 189 residues long: GTPase NRas (189 aa).

GTP is bound by residues 10–18 and 29–30; these read GAGGVGKSA and VD. The short motif at 32 to 40 is the Effector region element; sequence YDPTIEDSY. (Microbial infection) O-linked (Glc) threonine; by P.sordellii toxin TcsL glycosylation occurs at Thr-35. 57–61 contacts GTP; it reads DTAGQ. Residue Ser-89 is modified to Phosphoserine. 116–119 serves as a coordination point for GTP; sequence NKCD. The segment at 166–185 is hypervariable region; that stretch reads YRMKKLNSSDDGTQGCMGLP. Lys-170 participates in a covalent cross-link: Glycyl lysine isopeptide (Lys-Gly) (interchain with G-Cter in ubiquitin). Cys-181 is lipidated: S-palmitoyl cysteine. The S-farnesyl cysteine moiety is linked to residue Cys-186. Residues 187 to 189 constitute a propeptide, removed in mature form; that stretch reads VVM.

It belongs to the small GTPase superfamily. Ras family. In terms of assembly, interacts (active GTP-bound form preferentially) with RGS14. Interacts (active GTP-bound form) with RASSF7. Interacts (active GTP-bound form) with both SHOC2 and PP1c (all isoforms) to form a tertiary complex; SHOC2 and PP1c preferably bind M-Ras/MRAS, but they also bind K-Ras/KRAS, N-Ras/NRAS and H-Ras/HRAS. Palmitoylated by the ZDHHC9-GOLGA7 complex. Depalmitoylated by ABHD17A, ABHD17B and ABHD17C. A continuous cycle of de- and re-palmitoylation regulates rapid exchange between plasma membrane and Golgi. In terms of processing, acetylation at Lys-104 prevents interaction with guanine nucleotide exchange factors (GEFs). Post-translationally, fatty-acylated at Lys-169 and/or Lys-170. Ubiquitinated by the BCR(LZTR1) E3 ubiquitin ligase complex at Lys-170 in a non-degradative manner, leading to inhibit Ras signaling by decreasing Ras association with membranes. In terms of processing, phosphorylation at Ser-89 enhances NRAS association with its downstream effectors. Post-translationally, (Microbial infection) Glucosylated at Thr-35 by P.sordellii toxin TcsL.

It localises to the cell membrane. The protein resides in the golgi apparatus membrane. The enzyme catalyses GTP + H2O = GDP + phosphate + H(+). Its activity is regulated as follows. Alternates between an inactive form bound to GDP and an active form bound to GTP. Activated by a guanine nucleotide-exchange factor (GEF) and inactivated by a GTPase-activating protein (GAP). Functionally, ras proteins bind GDP/GTP and possess intrinsic GTPase activity. The chain is GTPase NRas (NRAS) from Homo sapiens (Human).